Here is a 449-residue protein sequence, read N- to C-terminus: Gamma-aminobutyric acid receptor subunit delta (449 aa).

Positions 1 to 24 (MDVLGWLLLPLLLLCTQPHHGARA) are cleaved as a signal peptide. The Extracellular portion of the chain corresponds to 25–251 (MNDIGDYVGS…QLRRNRGVYI (227 aa)). N-linked (GlcNAc...) asparagine glycans are attached at residues N103 and N106. A disulfide bond links C164 and C178. The helical transmembrane segment at 252 to 271 (IQSYMPSVLLVAMSWVSFWI) threads the bilayer. At 272 to 275 (SQAA) the chain is on the cytoplasmic side. A helical membrane pass occupies residues 276 to 298 (VPARVSLGITTVLTMTTLMVSAR). The Extracellular segment spans residues 299–308 (SSLPRASAIK). Residues 309-331 (ALDVYFWICYVFVFAALVEYAFA) form a helical membrane-spanning segment. At 332 to 423 (HFNADYRKKR…SRLKPIDADT (92 aa)) the chain is on the cytoplasmic side. The residue at position 390 (S390) is a Phosphoserine. A helical membrane pass occupies residues 424–446 (IDIYARAVFPAAFAAVNIIYWAA). At 447–449 (YTM) the chain is on the extracellular side.

The protein belongs to the ligand-gated ion channel (TC 1.A.9) family. Gamma-aminobutyric acid receptor (TC 1.A.9.5) subfamily. GABRD sub-subfamily. As to quaternary structure, heteropentamer, formed by a combination of alpha (GABRA1-6), beta (GABRB1-3), gamma (GABRG1-3), delta (GABRD), epsilon (GABRE), rho (GABRR1-3), pi (GABRP) and theta (GABRQ) chains, each subunit exhibiting distinct physiological and pharmacological properties.

Its subcellular location is the cell membrane. The enzyme catalyses chloride(in) = chloride(out). Its function is as follows. Delta subunit of the heteropentameric ligand-gated chloride channel gated by gamma-aminobutyric acid (GABA), a major inhibitory neurotransmitter in the brain. GABA-gated chloride channels, also named GABA(A) receptors (GABAAR), consist of five subunits arranged around a central pore and contain GABA active binding site(s) located at the alpha and beta subunit interface(s). When activated by GABA, GABAARs selectively allow the flow of chloride anions across the cell membrane down their electrochemical gradient. GABAARs containing delta/GABRD subunits are predominantly expressed and located in extrasynaptic or perisynaptic positions on hippocampus and cerebellar granule cells, and contribute to the tonic GABAergic inhibition. GABAAR containing alpha-4-beta-3-delta subunits can simultaneously bind GABA and histamine where histamine binds at the interface of two neighboring beta subunits, which may be involved in the regulation of sleep and wakefulness. This chain is Gamma-aminobutyric acid receptor subunit delta, found in Mus musculus (Mouse).